The sequence spans 275 residues: NAD(P)H dehydrogenase [quinone] 1 (275 aa).

Residues histidine 13, 19–20, and glutamine 68 contribute to the FAD site; that span reads FN. Serine 83 bears the Phosphoserine mark. 105–108 is a binding site for FAD; the sequence is LQWF. 127–129 provides a ligand contact to substrate; that stretch reads AYT. FAD-binding positions include 149–152, tyrosine 157, and arginine 202; that span reads TTGG. The interval 226–275 is important for apoenzyme conformational stability; the sequence is PSSLFDLNFQAGFLLKKEIEDEQKNNKYGLSVGHHLGKPIPTDNQIKARK. Residue lysine 252 forms a Glycyl lysine isopeptide (Lys-Gly) (interchain with G-Cter in SUMO2) linkage.

This sequence belongs to the NAD(P)H dehydrogenase (quinone) family. Homodimer. Interacts with PDLIM4 isoform 2; this interaction stabilizes PDLIM4 isoform 2 in response to oxidative stress and protects it from ubiquitin-independent degradation by the core 20S proteasome. Interacts with TP73 (via SAM domain); this interaction is NADH-dependent, stabilizes TP73 in response to oxidative stress and protects it from ubiquitin-independent degradation by the 20S proteasome. Interacts with TP53; this interaction is NADH-dependent, stabilizes TP53 in response to oxidative stress and protects it from ubiquitin-independent degradation by the 20S proteasome. It depends on FAD as a cofactor.

It is found in the cytoplasm. The protein localises to the cytosol. It catalyses the reaction a quinone + NADH + H(+) = a quinol + NAD(+). The enzyme catalyses a quinone + NADPH + H(+) = a quinol + NADP(+). The catalysed reaction is ubiquinone-10 + NADH + H(+) = ubiquinol-10 + NAD(+). It carries out the reaction menadione + NADH + H(+) = menadiol + NAD(+). In terms of biological role, flavin-containing quinone reductase that catalyzes two-electron reduction of quinones to hydroquinones using either NADH or NADPH as electron donors. In a ping-pong kinetic mechanism, the electrons are sequentially transferred from NAD(P)H to flavin cofactor and then from reduced flavin to the quinone, bypassing the formation of semiquinone and reactive oxygen species. Regulates cellular redox state primarily through quinone detoxification. Reduces components of plasma membrane redox system such as coenzyme Q and vitamin quinones, producing antioxidant hydroquinone forms. In the process may function as superoxide scavenger to prevent hydroquinone oxidation and facilitate excretion. Alternatively, can activate quinones and their derivatives by generating redox reactive hydroquinones with DNA cross-linking antitumor potential. Acts as a gatekeeper of the core 20S proteasome known to degrade proteins with unstructured regions. Upon oxidative stress, interacts with tumor suppressors TP53 and TP73 in a NADH-dependent way and inhibits their ubiquitin-independent degradation by the 20S proteasome. This Cavia porcellus (Guinea pig) protein is NAD(P)H dehydrogenase [quinone] 1 (NQO1).